Here is a 445-residue protein sequence, read N- to C-terminus: MKEIEALKEQYPLVNNLIATEEVFWVNPNMEKYETAIKNSPLNEEHVKDAEERLKRFAPYIAKVFPETKETGGIIESPLVKISSMKQSLEKNYEQPILGELLLKCDSHLPISGSIKARGGIYEVLKHAEQLALQHGMLTEKDDYSILDSDRFRGFFAKYSIAVGSTGNLGLSIGIMSAKLGFNVTVHMSADAKQWKKDLLRSKGVNVIEYEADYSKAVEEGRLQADADPSCYFVDDENSHDLFLGYAVAASRLQKQLEELEIVVDEEHPLFVYLPCGVGGGPGGVAFGLKLLYKDNVHCFFAEPTHSPCMLLGLMTGLHDKIAVQDIGIDNVTDADGLAVGRPSGFVGKTMEPFLSGNYTVSDEELYRLLKELADTENIYLEPSALAGMIGPLNVCKAENEYLQKQQLTEKVKKGTHIVWGTGGSMVPEDVMNGYYKKGLELTCK.

Position 116 is an N6-(pyridoxal phosphate)lysine (Lys-116).

This sequence belongs to the serine/threonine dehydratase family. DsdA subfamily. Requires pyridoxal 5'-phosphate as cofactor.

It catalyses the reaction D-serine = pyruvate + NH4(+). The protein is Probable D-serine dehydratase of Bacillus mycoides (strain KBAB4) (Bacillus weihenstephanensis).